The chain runs to 1580 residues: Ras GTPase-activating protein raskol (1580 aa).

Position 164 is a phosphoserine (serine 164). The residue at position 167 (threonine 167) is a Phosphothreonine. The segment at 197-223 is disordered; that stretch reads LKRTKSVTKLERTKRGSGGLRGSRSHE. Serine 221 and serine 224 each carry phosphoserine. The region spanning 233–291 is the PH domain; the sequence is STIDLSCTGAVGVAPVHQSVLGRRHCFQVRGGPRGERYYSCGSRQERDLWIYSLRKSIA. The C2 domain maps to 282–400; the sequence is WIYSLRKSIA…TSRLPCEQWY (119 aa). Residues 490-700 form the Ras-GAP domain; sequence GLAGAFLTDV…ARMQQFLEII (211 aa). Disordered regions lie at residues 764–819, 857–892, 904–1023, 1112–1218, 1284–1313, 1334–1443, and 1561–1580; these read GMGT…QPQH, LLQQ…HQHP, AGNQ…SYDD, ANHH…QQFG, LSGG…YGRL, VGYG…LGKS, and YETQ…QKPQ. Polar residues predominate over residues 776 to 805; sequence ATSSTHSIASENQENRNPGSSGSHAGSNSE. 3 stretches are compositionally biased toward low complexity: residues 806-818, 857-885, and 926-939; these read QLLP…AQPQ, LLQQ…GHQQ, and SSSL…LLHG. A compositionally biased stretch (basic residues) spans 940-954; it reads HQQHAHHPQQLHPHH. Residues 987–1020 show a composition bias toward low complexity; sequence TSTPSSTRSRTLPRNGNPNANGNVGSSNNNQSGS. Polar residues predominate over residues 1140 to 1150; sequence SAKSSHCSSGY. Low complexity predominate over residues 1151–1169; it reads QSISTNPSPSQSSSPVESQ. 2 positions are modified to phosphoserine: serine 1158 and serine 1164. Polar residues predominate over residues 1186–1206; sequence PSYQLQPQTGSSRSSAQSNTH. Composition is skewed to low complexity over residues 1207–1216, 1285–1299, and 1351–1362; these read QQQQQQQQQQ, SGGS…ASTS, and HQQQQNPMQQQQ. Residues 1363–1372 show a composition bias toward basic and acidic residues; the sequence is QRERDQEHKQ. Low complexity predominate over residues 1374–1388; that stretch reads AGSVAGSVGSATSAA. Polar residues predominate over residues 1396-1415; it reads SARTLSDSSTDTEGHCNQLQ. Phosphoserine is present on residues serine 1401 and serine 1403. Residues 1427 to 1438 show a composition bias toward gly residues; that stretch reads GGSGGGGAGSEQ. The segment covering 1563 to 1580 has biased composition (low complexity); sequence TQQQQQQHQAPPKTQKPQ.

Its subcellular location is the cytoplasm. The protein localises to the cell membrane. The protein resides in the apical cell membrane. In terms of biological role, GTPase-activating protein, which acts as a negative regulator for some members of the Ras family. Probably decreases their signaling activity by stimulating their intrinsic GTPase activity, thereby lowering the levels of the GTP-bound active form. Functions with DE-cadherin (shg) to promote embryonic border cell (BC) migration and adhesion by regulating the distribution of actin protrusions in BCs. Promotes shg-mediated adhesion at the BC interfaces and likely maintains BC cluster adhesion during BC detachment from the follicular epithelium and subsequent BC migration. Also required for restricting the development of actin-rich protrusions to the front of migrating BC clusters thus ensuring unidirectional BC migration. Possibly functions by suppressing Rac1 signaling in non-leading BCs, thus limiting its activity to leading BCs where it initiates localized actin cytoskeleton remodeling to produce the polarized protrusions. The protein is Ras GTPase-activating protein raskol of Drosophila melanogaster (Fruit fly).